The chain runs to 436 residues: Adenylosuccinate synthetase (436 aa).

GTP contacts are provided by residues 12-18 (GDEGKGK) and 40-42 (GHT). Asp13 serves as the catalytic Proton acceptor. Asp13 and Gly40 together coordinate Mg(2+). IMP contacts are provided by residues 13–16 (DEGK), 38–41 (NAGH), Thr128, Arg142, Gln223, Thr238, and Arg302. His41 functions as the Proton donor in the catalytic mechanism. Position 298 to 304 (298 to 304 (TTTGRRR)) interacts with substrate. GTP contacts are provided by residues Arg304, 330–332 (KLD), and 412–414 (SLG).

It belongs to the adenylosuccinate synthetase family. As to quaternary structure, homodimer. Mg(2+) serves as cofactor.

The protein localises to the cytoplasm. It catalyses the reaction IMP + L-aspartate + GTP = N(6)-(1,2-dicarboxyethyl)-AMP + GDP + phosphate + 2 H(+). It functions in the pathway purine metabolism; AMP biosynthesis via de novo pathway; AMP from IMP: step 1/2. Its function is as follows. Plays an important role in the de novo pathway of purine nucleotide biosynthesis. Catalyzes the first committed step in the biosynthesis of AMP from IMP. This Prochlorococcus marinus (strain MIT 9312) protein is Adenylosuccinate synthetase.